Consider the following 217-residue polypeptide: 7-cyano-7-deazaguanine synthase (217 aa).

Residue 10–20 (FSGGQDSTTCL) participates in ATP binding. Residues Cys-185, Cys-194, Cys-197, and Cys-200 each contribute to the Zn(2+) site.

Belongs to the QueC family. As to quaternary structure, homodimer. The cofactor is Zn(2+).

It catalyses the reaction 7-carboxy-7-deazaguanine + NH4(+) + ATP = 7-cyano-7-deazaguanine + ADP + phosphate + H2O + H(+). It functions in the pathway purine metabolism; 7-cyano-7-deazaguanine biosynthesis. In terms of biological role, catalyzes the ATP-dependent conversion of 7-carboxy-7-deazaguanine (CDG) to 7-cyano-7-deazaguanine (preQ(0)). The sequence is that of 7-cyano-7-deazaguanine synthase from Streptococcus thermophilus (strain ATCC BAA-491 / LMD-9).